The following is a 377-amino-acid chain: Aspartate aminotransferase (377 aa).

Residues Gly-37, Trp-123, and Asn-173 each contribute to the L-aspartate site. Lys-234 carries the N6-(pyridoxal phosphate)lysine modification. Position 353 (Arg-353) interacts with L-aspartate.

It belongs to the class-I pyridoxal-phosphate-dependent aminotransferase family. Homodimer. Pyridoxal 5'-phosphate is required as a cofactor.

It is found in the cytoplasm. It carries out the reaction L-aspartate + 2-oxoglutarate = oxaloacetate + L-glutamate. The sequence is that of Aspartate aminotransferase (aspC) from Thermotoga maritima (strain ATCC 43589 / DSM 3109 / JCM 10099 / NBRC 100826 / MSB8).